Here is a 147-residue protein sequence, read N- to C-terminus: Hemoglobin subunit beta (147 aa).

V2 carries the N-acetylvaline modification. The region spanning 3 to 147 (HLTGEEKSAV…VANALAHKYH (145 aa)) is the Globin domain. Phosphothreonine is present on T13. At S45 the chain carries Phosphoserine. K60 is subject to N6-acetyllysine. H64 provides a ligand contact to heme b. Position 83 is an N6-acetyllysine (K83). H93 is a binding site for heme b. Position 94 is an S-nitrosocysteine (C94). N6-acetyllysine is present on K145.

It belongs to the globin family. As to quaternary structure, heterotetramer of two alpha chains and two beta chains. Red blood cells.

In terms of biological role, involved in oxygen transport from the lung to the various peripheral tissues. In Ateles paniscus (Black spider monkey), this protein is Hemoglobin subunit beta (HBB).